Here is a 551-residue protein sequence, read N- to C-terminus: Protein PLASTID TRANSCRIPTIONALLY ACTIVE 12, chloroplastic (551 aa).

Residues 1 to 47 (MASCSRTWLLPGMAPQATAQTVPRPLQSLKVFAGLPHRRRVLFSGVS) constitute a chloroplast transit peptide. Disordered stretches follow at residues 76 to 161 (SSYF…EGES) and 463 to 529 (HSYN…DQLS). Over residues 109 to 119 (RVRAARAPAPV) the composition is skewed to low complexity. 2 stretches are compositionally biased toward acidic residues: residues 467-476 (EDSDDDEEDA) and 485-498 (SLED…DAED). A compositionally biased stretch (polar residues) spans 505 to 516 (RNWSVLKTTGQA). The segment covering 518–529 (NPKEKSKKDQLS) has biased composition (basic and acidic residues).

As to quaternary structure, component of the plastid-encoded plastid RNA polymerase (PEP) complex.

It localises to the plastid. Its subcellular location is the chloroplast. Required for the activity of the plastid-encoded RNA polymerase (PEP) and full expression of genes transcribed by PEP. Required for the proper build-up and formation of the PEP-complex. Binds single-stranded (ss) DNA and RNA, but not double-stranded (ds) DNA. This Oryza sativa subsp. japonica (Rice) protein is Protein PLASTID TRANSCRIPTIONALLY ACTIVE 12, chloroplastic.